The chain runs to 401 residues: Phosphoglycerate kinase, cytosolic (401 aa).

Alanine 24, aspartate 25, asparagine 27, arginine 41, serine 63, histidine 64, glycine 66, arginine 67, arginine 122, histidine 154, and arginine 155 together coordinate (2R)-3-phosphoglycerate. Glycine 200 contacts ADP. Position 200 (glycine 200) interacts with CDP. The AMP site is built by lysine 202 and lysine 206. Position 206 (lysine 206) interacts with ATP. Glycine 224 is an ADP binding site. Residue glycine 224 coordinates CDP. AMP-binding residues include glycine 225 and glycine 297. ATP is bound by residues glycine 225 and glycine 297. CDP is bound by residues glycine 322 and phenylalanine 327. Residue phenylalanine 327 participates in ADP binding. Glutamate 328 is an AMP binding site. ATP contacts are provided by glutamate 328, aspartate 359, and serine 360. Aspartate 359 serves as a coordination point for Mg(2+).

Belongs to the phosphoglycerate kinase family. In terms of assembly, monomer. Requires Mg(2+) as cofactor.

Its subcellular location is the cytoplasm. The enzyme catalyses (2R)-3-phosphoglycerate + ATP = (2R)-3-phospho-glyceroyl phosphate + ADP. It participates in carbohydrate degradation; glycolysis; pyruvate from D-glyceraldehyde 3-phosphate: step 2/5. The polypeptide is Phosphoglycerate kinase, cytosolic (Triticum aestivum (Wheat)).